The primary structure comprises 172 residues: Shikimate kinase (172 aa).

11-16 contacts ATP; sequence GAGKST. Serine 15 is a binding site for Mg(2+). Residues aspartate 33, arginine 57, and glycine 79 each contribute to the substrate site. Position 117 (arginine 117) interacts with ATP. Arginine 136 contacts substrate. Residue arginine 153 participates in ATP binding.

This sequence belongs to the shikimate kinase family. In terms of assembly, monomer. It depends on Mg(2+) as a cofactor.

Its subcellular location is the cytoplasm. The enzyme catalyses shikimate + ATP = 3-phosphoshikimate + ADP + H(+). It functions in the pathway metabolic intermediate biosynthesis; chorismate biosynthesis; chorismate from D-erythrose 4-phosphate and phosphoenolpyruvate: step 5/7. In terms of biological role, catalyzes the specific phosphorylation of the 3-hydroxyl group of shikimic acid using ATP as a cosubstrate. The polypeptide is Shikimate kinase (Pseudomonas putida (strain ATCC 700007 / DSM 6899 / JCM 31910 / BCRC 17059 / LMG 24140 / F1)).